Here is a 444-residue protein sequence, read N- to C-terminus: MSETSQTIPELVSWAREREFSLSLNTERLSYLLAIALYNNERFDGEMQESDLVDIFRHVSKEFDQSDNITTRANNAINDLVKQRFINRFSSEFTDGLSIYRLTPLGVGVSDYYIRQREFSALRLSVQLAIVADEIQRASESAEEAVRRGEDEYYWRRNVFAPLKYSVAEIFDSIDLSQRIMDENQQSIKEEIAELLTKDWQAAIASCERLLDETSGNLRELQDTLNAAGDKLQAQLLRIQDCVMGRNELYFIDQLIVDLQSKLDRIISWGQQAIDLWIGYDRHVHKFIRTAIDMDKNRVFSQRLRQSIHHYFDAPWFLWTAQAERLVDLRDEELTLRDEDALGELPEALEYEQLSDLHDQIVEAMQALLINHREHNQPIDLSLVLKQQLDNYPLSRHFDVARVIVDQAVRLGMASADLSGVYSQWHEINDYGAEVQANVIDEYK.

The leucine-zipper stretch occupies residues 211–239 (LDETSGNLRELQDTLNAAGDKLQAQLLRI).

This sequence belongs to the MukF family. As to quaternary structure, interacts, and probably forms a ternary complex, with MukE and MukB via its C-terminal region. The complex formation is stimulated by calcium or magnesium. It is required for an interaction between MukE and MukB.

The protein localises to the cytoplasm. Its subcellular location is the nucleoid. Involved in chromosome condensation, segregation and cell cycle progression. May participate in facilitating chromosome segregation by condensation DNA from both sides of a centrally located replisome during cell division. Not required for mini-F plasmid partitioning. Probably acts via its interaction with MukB and MukE. Overexpression results in anucleate cells. It has a calcium binding activity. The polypeptide is Chromosome partition protein MukF (Actinobacillus succinogenes (strain ATCC 55618 / DSM 22257 / CCUG 43843 / 130Z)).